The sequence spans 1068 residues: Putative protein TIC 214 N-terminal part (1068 aa).

6 helical membrane-spanning segments follow: residues 11–31, 68–88, 92–112, 131–151, 166–186, and 213–233; these read VLWVPILSWINFSSTFFLFGI, ITGQLLIFLSIFYSPLYVLLI, LLTLLVLPYILFYWYKIKDLI, IFFDSFIFQLFNPVVLPSPVL, FIFLLSSFLGWCFGQFLFVSL, and FSIIILSFSLLHLSRAPVPFI.

It belongs to the TIC214 family. In terms of assembly, part of the Tic complex.

The protein resides in the plastid. It localises to the chloroplast inner membrane. In terms of biological role, involved in protein precursor import into chloroplasts. May be part of an intermediate translocation complex acting as a protein-conducting channel at the inner envelope. This chain is Putative protein TIC 214 N-terminal part, found in Marchantia polymorpha (Common liverwort).